Here is a 653-residue protein sequence, read N- to C-terminus: Biotin biosynthesis bifunctional protein BioWF (653 aa).

R278 contributes to the substrate binding site. 365-366 (GY) lines the pyridoxal 5'-phosphate pocket. H390 serves as a coordination point for substrate. Residues S436, 461 to 464 (DDAH), and 492 to 495 (TASK) contribute to the pyridoxal 5'-phosphate site. K495 carries the N6-(pyridoxal phosphate)lysine modification.

The protein in the N-terminal section; belongs to the BioW family. This sequence in the C-terminal section; belongs to the class-II pyridoxal-phosphate-dependent aminotransferase family. BioF subfamily. In terms of assembly, homodimer. Mg(2+) is required as a cofactor. It depends on pyridoxal 5'-phosphate as a cofactor.

It carries out the reaction heptanedioate + ATP + CoA = 6-carboxyhexanoyl-CoA + AMP + diphosphate. The catalysed reaction is 6-carboxyhexanoyl-[ACP] + L-alanine + H(+) = (8S)-8-amino-7-oxononanoate + holo-[ACP] + CO2. It participates in metabolic intermediate metabolism; pimeloyl-CoA biosynthesis; pimeloyl-CoA from pimelate: step 1/1. It functions in the pathway cofactor biosynthesis; biotin biosynthesis. Catalyzes both the decarboxylative condensation of pimeloyl-[acyl-carrier protein] and L-alanine to produce 8-amino-7-oxononanoate (AON), [acyl-carrier protein], and carbon dioxide, and the transformation of pimelate into pimeloyl-CoA with concomitant hydrolysis of ATP to AMP. The sequence is that of Biotin biosynthesis bifunctional protein BioWF from Cutibacterium acnes (strain DSM 16379 / KPA171202) (Propionibacterium acnes).